We begin with the raw amino-acid sequence, 544 residues long: 4-coumarate--CoA ligase 1 (544 aa).

ATP-binding residues include Ser190, Ser191, Gly192, Thr193, Thr194, and Lys198. Tyr240 contacts (E)-4-coumaroyl-AMP. Position 261 (Lys261) interacts with CoA. The SBD1 stretch occupies residues 263-332 (DIVPFLELIQ…AKFPNAKLGQ (70 aa)). (E)-4-coumaroyl-AMP is bound by residues Ala310, Gln332, Gly333, Thr337, and Met345. 3 residues coordinate ATP: Gln332, Gly333, and Thr337. The tract at residues 333-400 (GYGMTEAGPV…IRGDQIMKGY (68 aa)) is SBD2. Residues Asp421 and Arg436 each contribute to the ATP site. Residues Lys438 and Lys442 each contribute to the (E)-4-coumaroyl-AMP site. 2 residues coordinate CoA: Lys444 and Gly445. Lys527 contributes to the ATP binding site.

The protein belongs to the ATP-dependent AMP-binding enzyme family. Mg(2+) is required as a cofactor.

The catalysed reaction is (E)-4-coumarate + ATP + CoA = (E)-4-coumaroyl-CoA + AMP + diphosphate. The enzyme catalyses (E)-4-coumarate + ATP + H(+) = (E)-4-coumaroyl-AMP + diphosphate. It carries out the reaction (E)-4-coumaroyl-AMP + CoA = (E)-4-coumaroyl-CoA + AMP + H(+). It functions in the pathway phytoalexin biosynthesis; 3,4',5-trihydroxystilbene biosynthesis; 3,4',5-trihydroxystilbene from trans-4-coumarate: step 1/2. Carboxylate--CoA ligase that may use 4-coumarate as substrate. Follows a two-step reaction mechanism, wherein the carboxylate substrate first undergoes adenylation by ATP, followed by a thioesterification in the presence of CoA to yield the final CoA thioester. This Petroselinum crispum (Parsley) protein is 4-coumarate--CoA ligase 1 (4CL1).